We begin with the raw amino-acid sequence, 618 residues long: Mitochondrial Rho GTPase 2 (618 aa).

The Cytoplasmic segment spans residues 1 to 592 (MRRDVRILLL…ELHPSSFWLR (592 aa)). Positions 2–168 (RRDVRILLLG…FYYAQKAVLH (167 aa)) constitute a Miro 1 domain. GTP contacts are provided by G16, K17, T18, and S19. T18 is a Mg(2+) binding site. 2 residues coordinate Mg(2+): P35 and D57. S59 serves as a coordination point for GTP. A Glycyl lysine isopeptide (Lys-Gly) (interchain with G-Cter in ubiquitin) cross-link involves residue K96. The GTP site is built by N118, K119, D121, A149, and K150. K119 is covalently cross-linked (Glycyl lysine isopeptide (Lys-Gly) (interchain with G-Cter in ubiquitin)). Residue K164 forms a Glycyl lysine isopeptide (Lys-Gly) (interchain with G-Cter in ubiquitin) linkage. 2 EF-hand domains span residues 184–219 (ACAQALTRIFRLSDQDLDQALSDEELNAFQKSCFGH) and 304–339 (LGYQFVQRVFEKHDQDRDGALSPVELQSLFSVFPAA). Ca(2+)-binding residues include D197, D199, D201, E208, D317, D319, D321, and E328. Positions 414–576 (RSVLLCKVVG…FTQLATMAAF (163 aa)) constitute a Miro 2 domain. Positions 426, 428, 429, 430, and 431 each coordinate GTP. Positions 426, 428, 429, 430, and 431 each coordinate GDP. S430 serves as a coordination point for Mg(2+). E471 serves as a coordination point for Mg(2+). The GTP site is built by K525, D527, and C556. Positions 525, 527, and 556 each coordinate GDP. Residues 593 to 615 (GLLGVVGAAVAAVLSFSLYRVLV) traverse the membrane as a helical; Anchor for type IV membrane protein segment. Residues 616 to 618 (KSQ) lie on the Mitochondrial intermembrane side of the membrane.

Belongs to the mitochondrial Rho GTPase family. In terms of assembly, homodimer. Interacts with the kinesin-binding proteins TRAK1/OIP106 and TRAK2/GRIF1, forming a link between mitochondria and the trafficking apparatus of the microtubules. Interacts with ARMCX3. Found in a complex with KIF5B, OGT, RHOT1 and TRAK1. Post-translationally, ubiquitinated by PRKN in a PINK1-dependent manner, leading to its degradation. As to expression, ubiquitously expressed. Highly expressed in heart, liver, skeletal muscle, kidney and pancreas.

The protein resides in the mitochondrion outer membrane. It carries out the reaction GTP + H2O = GDP + phosphate + H(+). The enzyme catalyses ATP + H2O = ADP + phosphate + H(+). It catalyses the reaction UTP + H2O = UDP + phosphate + H(+). Its function is as follows. Atypical mitochondrial nucleoside-triphosphatase (NTPase) involved in mitochondrial trafficking. Probably involved in control of anterograde transport of mitochondria and their subcellular distribution. Can hydrolyze GTP. Can hydrolyze ATP and UTP. This Homo sapiens (Human) protein is Mitochondrial Rho GTPase 2 (RHOT2).